We begin with the raw amino-acid sequence, 122 residues long: Large ribosomal subunit protein bL12 (122 aa).

Belongs to the bacterial ribosomal protein bL12 family. As to quaternary structure, homodimer. Part of the ribosomal stalk of the 50S ribosomal subunit. Forms a multimeric L10(L12)X complex, where L10 forms an elongated spine to which 2 to 4 L12 dimers bind in a sequential fashion. Binds GTP-bound translation factors.

Forms part of the ribosomal stalk which helps the ribosome interact with GTP-bound translation factors. Is thus essential for accurate translation. This Xanthomonas oryzae pv. oryzae (strain MAFF 311018) protein is Large ribosomal subunit protein bL12.